We begin with the raw amino-acid sequence, 418 residues long: Glutamyl-tRNA reductase (418 aa).

Substrate is bound by residues 49 to 52, Ser105, 110 to 112, and Gln116; these read TCNR and EPQ. Cys50 (nucleophile) is an active-site residue. 185–190 provides a ligand contact to NADP(+); that stretch reads GAGEMI.

It belongs to the glutamyl-tRNA reductase family. In terms of assembly, homodimer.

The enzyme catalyses (S)-4-amino-5-oxopentanoate + tRNA(Glu) + NADP(+) = L-glutamyl-tRNA(Glu) + NADPH + H(+). It functions in the pathway porphyrin-containing compound metabolism; protoporphyrin-IX biosynthesis; 5-aminolevulinate from L-glutamyl-tRNA(Glu): step 1/2. Catalyzes the NADPH-dependent reduction of glutamyl-tRNA(Glu) to glutamate 1-semialdehyde (GSA). This Aromatoleum aromaticum (strain DSM 19018 / LMG 30748 / EbN1) (Azoarcus sp. (strain EbN1)) protein is Glutamyl-tRNA reductase.